The chain runs to 105 residues: Large ribosomal subunit protein eL30 (105 aa).

Residues Lys-22, Lys-53, and Lys-83 each participate in a glycyl lysine isopeptide (Lys-Gly) (interchain with G-Cter in ubiquitin) cross-link.

This sequence belongs to the eukaryotic ribosomal protein eL30 family. Component of the large ribosomal subunit (LSU). Mature yeast ribosomes consist of a small (40S) and a large (60S) subunit. The 40S small subunit contains 1 molecule of ribosomal RNA (18S rRNA) and 33 different proteins (encoded by 57 genes). The large 60S subunit contains 3 rRNA molecules (25S, 5.8S and 5S rRNA) and 46 different proteins (encoded by 81 genes).

Its subcellular location is the cytoplasm. In terms of biological role, component of the ribosome, a large ribonucleoprotein complex responsible for the synthesis of proteins in the cell. The small ribosomal subunit (SSU) binds messenger RNAs (mRNAs) and translates the encoded message by selecting cognate aminoacyl-transfer RNA (tRNA) molecules. The large subunit (LSU) contains the ribosomal catalytic site termed the peptidyl transferase center (PTC), which catalyzes the formation of peptide bonds, thereby polymerizing the amino acids delivered by tRNAs into a polypeptide chain. The nascent polypeptides leave the ribosome through a tunnel in the LSU and interact with protein factors that function in enzymatic processing, targeting, and the membrane insertion of nascent chains at the exit of the ribosomal tunnel. The polypeptide is Large ribosomal subunit protein eL30 (Saccharomyces cerevisiae (strain ATCC 204508 / S288c) (Baker's yeast)).